The following is a 541-amino-acid chain: Major facilitator-type transporter ecdD (541 aa).

The helical transmembrane segment at 15–35 (AWPAILISGFVAFGGILFGYD) threads the bilayer. Asparagine 64 carries an N-linked (GlcNAc...) asparagine glycan. 4 consecutive transmembrane segments (helical) span residues 72-92 (AIVSILSAGTFFGALGASPMG), 106-126 (GIFVLGVVLQTIATSIPPFLA), 129-149 (FFAGLGVGLISALVPLYQSET), and 156-176 (GFIVGAYQFAITVGLLLASVL). Asparagine 178 and asparagine 184 each carry an N-linked (GlcNAc...) asparagine glycan. The helical transmembrane segment at 191–211 (IPIAVQFAWSIILVGGMLILP) threads the bilayer. N-linked (GlcNAc...) asparagine glycosylation occurs at asparagine 253. Transmembrane regions (helical) follow at residues 277 to 297 (LVTGCLLQALQQLSGINFIMY), 313 to 333 (VITLITNCVNVGSTLPGLYAI), 340 to 360 (PVLLTGAIGMAVSQLLVAVLG), 384 to 404 (IAFICLYIFFFAASWGPSAWV), 418 to 440 (SLSMTTATNWLLNWALSFSTPYL), and 454 to 474 (IFFIWFGCCFLCIGFVHFMIY).

Belongs to the major facilitator superfamily. Sugar transporter (TC 2.A.1.1) family.

The protein localises to the membrane. In Aspergillus rugulosus (Emericella rugulosa), this protein is Major facilitator-type transporter ecdD.